The primary structure comprises 239 residues: Ankyrin repeat domain-containing protein 49 (239 aa).

The residue at position 49 (serine 49) is a Phosphoserine. 4 ANK repeats span residues 73-103 (DPSR…HVNT), 107-136 (DEYT…DVHA), 140-169 (DGWT…DINA), and 173-206 (GLLT…GLKN).

As to expression, widely expressed in fetus, at a high level in fetal liver, brain and lung.

The protein resides in the nucleus. Induces HBG1 expression. May have a role in spermatogenesis where it promotes autophagy in response to serum starvation, via the NF-kappaB pathway. The polypeptide is Ankyrin repeat domain-containing protein 49 (ANKRD49) (Homo sapiens (Human)).